The chain runs to 234 residues: 2-C-methyl-D-erythritol 4-phosphate cytidylyltransferase (234 aa).

It belongs to the IspD/TarI cytidylyltransferase family. IspD subfamily.

It catalyses the reaction 2-C-methyl-D-erythritol 4-phosphate + CTP + H(+) = 4-CDP-2-C-methyl-D-erythritol + diphosphate. It participates in isoprenoid biosynthesis; isopentenyl diphosphate biosynthesis via DXP pathway; isopentenyl diphosphate from 1-deoxy-D-xylulose 5-phosphate: step 2/6. Catalyzes the formation of 4-diphosphocytidyl-2-C-methyl-D-erythritol from CTP and 2-C-methyl-D-erythritol 4-phosphate (MEP). This is 2-C-methyl-D-erythritol 4-phosphate cytidylyltransferase from Thermosynechococcus vestitus (strain NIES-2133 / IAM M-273 / BP-1).